The following is a 536-amino-acid chain: Inactive phospholipase D5 (536 aa).

Residues 69–89 (IVIFALVCCFAILVALIFSAV) form a helical membrane-spanning segment. Residue asparagine 121 is glycosylated (N-linked (GlcNAc...) asparagine). The PLD phosphodiesterase 1 domain occupies 215 to 242 (NKGRLQSSFWIVDKQHVYIGSAGLDWQS). An N-linked (GlcNAc...) asparagine glycan is attached at asparagine 302. Positions 434-460 (FPRLNRNKYMVTDGAAYIGNFDWVGND) constitute a PLD phosphodiesterase 2 domain.

It belongs to the phospholipase D family.

The protein localises to the membrane. This Homo sapiens (Human) protein is Inactive phospholipase D5 (PLD5).